Reading from the N-terminus, the 358-residue chain is Membrane-bound lytic murein transglycosylase C (358 aa).

An N-terminal signal peptide occupies residues 1–19; sequence MKITLKKLLILAIVPFLYA. Cys-20 carries the N-palmitoyl cysteine lipid modification. Cys-20 carries S-diacylglycerol cysteine lipidation.

The protein belongs to the transglycosylase Slt family.

It localises to the cell outer membrane. It catalyses the reaction Exolytic cleavage of the (1-&gt;4)-beta-glycosidic linkage between N-acetylmuramic acid (MurNAc) and N-acetylglucosamine (GlcNAc) residues in peptidoglycan, from either the reducing or the non-reducing ends of the peptidoglycan chains, with concomitant formation of a 1,6-anhydrobond in the MurNAc residue.. Murein-degrading enzyme. May play a role in recycling of muropeptides during cell elongation and/or cell division. The sequence is that of Membrane-bound lytic murein transglycosylase C from Actinobacillus succinogenes (strain ATCC 55618 / DSM 22257 / CCUG 43843 / 130Z).